A 145-amino-acid chain; its full sequence is Selenoprotein M (145 aa).

Positions 1–23 (MSLLLPPLALLLLLAALVAPATA) are cleaved as a signal peptide. Residues C45 and U48 each act as nucleophile in the active site. Positions 45–48 (CGGU) form a cross-link, cysteinyl-selenocysteine (Cys-Sec). A non-standard amino acid (selenocysteine) is located at residue U48.

It belongs to the selenoprotein M/F family. In terms of tissue distribution, widely expressed.

It localises to the cytoplasm. The protein localises to the perinuclear region. The protein resides in the endoplasmic reticulum. It is found in the golgi apparatus. Functionally, may function as a thiol-disulfide oxidoreductase that participates in disulfide bond formation. The sequence is that of Selenoprotein M from Homo sapiens (Human).